The sequence spans 308 residues: HTH-type transcriptional activator AllS (308 aa).

The HTH lysR-type domain occupies 2 to 59; it reads FDPETLRTFIAVAETGSFSKAAERLCKTTATISYRIKLLEENTGVALFFRTTRSVTLT. Residues 19 to 38 constitute a DNA-binding region (H-T-H motif); sequence FSKAAERLCKTTATISYRIK.

It belongs to the LysR transcriptional regulatory family.

In terms of biological role, positive regulator essential for the expression of allD operon. Binds to the allD promoter. The protein is HTH-type transcriptional activator AllS (allS) of Escherichia coli O6:K15:H31 (strain 536 / UPEC).